The chain runs to 550 residues: Methionine--tRNA ligase (550 aa).

The short motif at 13–23 (PYANGPLHFGH) is the 'HIGH' region element. Positions 145, 148, 158, and 161 each coordinate Zn(2+). Residues 331-335 (QFSKS) carry the 'KMSKS' region motif. Lys-334 contacts ATP.

The protein belongs to the class-I aminoacyl-tRNA synthetase family. MetG type 1 subfamily. As to quaternary structure, monomer. The cofactor is Zn(2+).

The protein resides in the cytoplasm. The enzyme catalyses tRNA(Met) + L-methionine + ATP = L-methionyl-tRNA(Met) + AMP + diphosphate. Functionally, is required not only for elongation of protein synthesis but also for the initiation of all mRNA translation through initiator tRNA(fMet) aminoacylation. The sequence is that of Methionine--tRNA ligase from Chlamydia trachomatis serovar A (strain ATCC VR-571B / DSM 19440 / HAR-13).